The following is a 483-amino-acid chain: S-adenosylhomocysteine hydrolase-like protein 1 (483 aa).

Positions 1–56 are disordered; that stretch reads MQEFTKFPTKTGRRSLSRSISQSSTDSYSSAASYTDSSDDEVSPREKQQTNSKGSS. The segment covering 17 to 36 has biased composition (low complexity); it reads SRSISQSSTDSYSSAASYTD. A PEST region spans residues 18–45; the sequence is RSISQSSTDSYSSAASYTDSSDDEVSPR. Position 21 is a phosphoserine; by PKD (Ser-21). 4 positions are modified to phosphoserine: Ser-24, Ser-27, Ser-30, and Ser-37. The interval 91-154 is interaction with BCL2L10; that stretch reads QGEKPLAGAK…EAGVAVFAWK (64 aa). Residues Thr-108, Asp-182, Glu-207, Lys-237, and Asp-241 each coordinate substrate. Residues 234–401 form an NAD binding region; that stretch reads SVTKQKFDNL…EGRLLNLSCS (168 aa). NAD(+) is bound by residues 271–275, Glu-294, and Asn-329; that span reads GYGEV. Phosphoserine is present on Ser-344. 350-352 contacts NAD(+); sequence MGH. The segment at 473 to 483 is PDZ-binding; sequence NGPFKPNYYRY.

It belongs to the adenosylhomocysteinase family. In terms of assembly, forms multimers. Forms heteromultimers with AHCYL2 (via the C-terminal region). Interacts (when phosphorylated) with ITPR1 (when not phosphorylated); the interaction suppresses inositol 1,4,5-trisphosphate binding to ITPR1. Interacts with BCL2L10; this strengthens the interaction of AHCYL1 with ITPR1. Interacts with CFTR and SLC26A6; the interactions take place once AHCYL1 is released from ITPR1 and increase CFTR and SLC26A6 activities. Interacts with RRM1; in a phosphorylation- and (dATP)-dependent manner. Interacts (via PEST domain when phosphorylated) with SLC4A4 isoform 1 but not isoform 2; the interaction increases SLC4A4 isoform 1 activity. Interacts (when phosphorylated) with SLC9A3; the interaction is required for SLC9A3 apical location and activity. Interacts (when phosphorylated) with FIP1L1; the interaction is direct and associates AHCYL1 with the CPSF complex and RNA. Interacts with PAPOLA. Interacts with ZCCHC4. Interacts with AHCY. The cofactor is NAD(+). In terms of processing, phosphorylated at Ser/Thr residues between Ser-21 and Thr-25 in the PEST region: required for interaction with dATP-bound RRM1 and ITPR1. Phosphorylation at Ser-21 by PRKD1 and CAMK4 is required for further phosphorylations by CSNK1A1. Phosphorylation is induced by oxidative stress. Probably phosphorylated by CAMK2A; phosphorylation at Ser-21 may be required for interaction with SLC9A3. Dephosphorylated in response to apoptotic stress conditions which causes translocation of both AHCYL1 and BCL2L10 from mitochondria-associated endoplasmic reticulum membranes and promotes apoptosis. In terms of tissue distribution, expressed in kidney proximal tubules and outer medulla (at protein level).

Its subcellular location is the endoplasmic reticulum. The protein resides in the cytoplasm. The protein localises to the cytosol. It is found in the apical cell membrane. It localises to the microsome. Its function is as follows. Multifaceted cellular regulator which coordinates several essential cellular functions including regulation of epithelial HCO3(-) and fluid secretion, mRNA processing and DNA replication. Regulates ITPR1 sensitivity to inositol 1,4,5-trisphosphate, competing for the common binding site and acting as endogenous 'pseudoligand' whose inhibitory activity can be modulated by its phosphorylation status. Promotes the formation of contact points between the endoplasmic reticulum (ER) and mitochondria, facilitating transfer of Ca(2+) from the ER to mitochondria. Under normal cellular conditions, functions cooperatively with BCL2L10 to limit ITPR1-mediated Ca(2+) release but, under apoptotic stress conditions, dephosphorylated which promotes dissociation of both AHCYL1 and BCL2L10 from mitochondria-associated endoplasmic reticulum membranes, inhibits BCL2L10 interaction with ITPR1 and leads to increased Ca(2+) transfer to mitochondria which promotes apoptosis. In the pancreatic and salivary ducts, at resting state, attenuates inositol 1,4,5-trisphosphate-induced calcium release by interacting with ITPR1. When extracellular stimuli induce ITPR1 phosphorylation or inositol 1,4,5-trisphosphate production, dissociates from ITPR1 to interact with CFTR and SLC26A6, mediating their synergistic activation by calcium and cAMP that stimulates the epithelial secretion of electrolytes and fluid. Also activates basolateral SLC4A4 isoform 1 to coordinate fluid and HCO3(-) secretion. Inhibits the effect of STK39 on SLC4A4 and CFTR by recruiting PP1 phosphatase which activates SLC4A4, SLC26A6 and CFTR through dephosphorylation. Mediates the induction of SLC9A3 surface expression produced by Angiotensin-2. Depending on the cell type, activates SLC9A3 in response to calcium or reverses SLC9A3R2-dependent calcium inhibition. May modulate the polyadenylation state of specific mRNAs, both by controlling the subcellular location of FIP1L1 and by inhibiting PAPOLA activity, in response to a stimulus that alters its phosphorylation state. Acts as a (dATP)-dependent inhibitor of ribonucleotide reductase large subunit RRM1, controlling the endogenous dNTP pool and ensuring normal cell cycle progression. In vitro does not exhibit any S-adenosyl-L-homocysteine hydrolase activity. The protein is S-adenosylhomocysteine hydrolase-like protein 1 of Rattus norvegicus (Rat).